The primary structure comprises 192 residues: dTTP/UTP pyrophosphatase (192 aa).

D75 functions as the Proton acceptor in the catalytic mechanism.

The protein belongs to the Maf family. YhdE subfamily. It depends on a divalent metal cation as a cofactor.

The protein resides in the cytoplasm. The enzyme catalyses dTTP + H2O = dTMP + diphosphate + H(+). It catalyses the reaction UTP + H2O = UMP + diphosphate + H(+). Its function is as follows. Nucleoside triphosphate pyrophosphatase that hydrolyzes dTTP and UTP. May have a dual role in cell division arrest and in preventing the incorporation of modified nucleotides into cellular nucleic acids. The protein is dTTP/UTP pyrophosphatase of Pelodictyon phaeoclathratiforme (strain DSM 5477 / BU-1).